We begin with the raw amino-acid sequence, 411 residues long: Na(+)-translocating NADH-quinone reductase subunit B (411 aa).

3 consecutive transmembrane segments (helical) span residues 56–76 (MMIT…YNVG), 120–140 (ALGA…CTIW), and 166–186 (IVPP…GIIV). Thr233 is subject to FMN phosphoryl threonine. 5 consecutive transmembrane segments (helical) span residues 272–292 (VSTL…IAAW), 294–314 (IIAG…LIGS), 319–339 (MFSM…GMVF), 348–368 (SFTN…AVLI), and 378–398 (GMML…YIVV).

Belongs to the NqrB/RnfD family. Composed of six subunits; NqrA, NqrB, NqrC, NqrD, NqrE and NqrF. FMN is required as a cofactor.

Its subcellular location is the cell inner membrane. The enzyme catalyses a ubiquinone + n Na(+)(in) + NADH + H(+) = a ubiquinol + n Na(+)(out) + NAD(+). In terms of biological role, NQR complex catalyzes the reduction of ubiquinone-1 to ubiquinol by two successive reactions, coupled with the transport of Na(+) ions from the cytoplasm to the periplasm. NqrA to NqrE are probably involved in the second step, the conversion of ubisemiquinone to ubiquinol. The polypeptide is Na(+)-translocating NADH-quinone reductase subunit B (Haemophilus influenzae (strain 86-028NP)).